Consider the following 71-residue polypeptide: Large ribosomal subunit protein uL29 (71 aa).

The protein belongs to the universal ribosomal protein uL29 family.

The chain is Large ribosomal subunit protein uL29 (rpl29) from Aeropyrum pernix (strain ATCC 700893 / DSM 11879 / JCM 9820 / NBRC 100138 / K1).